A 251-amino-acid chain; its full sequence is UPF0246 protein DSY0297 (251 aa).

It belongs to the UPF0246 family.

This chain is UPF0246 protein DSY0297, found in Desulfitobacterium hafniense (strain Y51).